A 404-amino-acid chain; its full sequence is Sialidase (404 aa).

A signal peptide spans 1–27 (MKKFIKILKVLSMAIVLSACNINGIFA). Position 55 (arginine 55) interacts with substrate. Aspartate 80 acts as the Proton acceptor in catalysis. BNR repeat units follow at residues 89 to 100 (AKSTDNGQTWDY), 158 to 169 (VYSDDNGETWSD), and 226 to 237 (IYSKDNGETWTM). Position 263 (arginine 263) interacts with substrate. The stretch at 273 to 284 (YISYDMGSTWEV) is one BNR 4 repeat. Tyrosine 365 serves as the catalytic Nucleophile.

It belongs to the glycosyl hydrolase 33 family. It is possible that the sialidase is cleaved in front of a cysteine within the leader peptide, forming a glyceride thioether bond which links the protein to the membrane. A second proteolytic cleavage releases the mature extracellular protein.

The protein localises to the secreted. It carries out the reaction Hydrolysis of alpha-(2-&gt;3)-, alpha-(2-&gt;6)-, alpha-(2-&gt;8)- glycosidic linkages of terminal sialic acid residues in oligosaccharides, glycoproteins, glycolipids, colominic acid and synthetic substrates.. Sialidases have been suggested to be pathogenic factors in microbial infections. The sequence is that of Sialidase from Paraclostridium sordellii (Clostridium sordellii).